The chain runs to 107 residues: UPF0060 membrane protein mll7841 (107 aa).

Helical transmembrane passes span 4-24 (LFYT…WAWW), 30-50 (PLWL…LALV), 60-80 (AAYG…VEGV), and 87-107 (LAGA…PRGA).

The protein belongs to the UPF0060 family.

The protein localises to the cell inner membrane. The polypeptide is UPF0060 membrane protein mll7841 (Mesorhizobium japonicum (strain LMG 29417 / CECT 9101 / MAFF 303099) (Mesorhizobium loti (strain MAFF 303099))).